We begin with the raw amino-acid sequence, 347 residues long: Dihydroorotase (347 aa).

The Zn(2+) site is built by H14 and H16. Residues 16–18 (HLR) and N42 contribute to the substrate site. 3 residues coordinate Zn(2+): K100, H137, and H175. At K100 the chain carries N6-carboxylysine. H137 contacts substrate. Residue L220 participates in substrate binding. D248 is a binding site for Zn(2+). D248 is an active-site residue. Substrate-binding residues include H252 and A264.

It belongs to the metallo-dependent hydrolases superfamily. DHOase family. Class II DHOase subfamily. In terms of assembly, homodimer. It depends on Zn(2+) as a cofactor.

The enzyme catalyses (S)-dihydroorotate + H2O = N-carbamoyl-L-aspartate + H(+). It participates in pyrimidine metabolism; UMP biosynthesis via de novo pathway; (S)-dihydroorotate from bicarbonate: step 3/3. Catalyzes the reversible cyclization of carbamoyl aspartate to dihydroorotate. In Pseudomonas syringae pv. syringae (strain B728a), this protein is Dihydroorotase.